The chain runs to 5430 residues: Microtubule-actin cross-linking factor 1 (5430 aa).

The interval 1 to 47 (MSSSDEETLSERSCRSERSCRSERSYRSERSGSLSPCPPGDTLPWNL) is disordered. The segment at 1–295 (MSSSDEETLS…VITYVSSIYD (295 aa)) is actin-binding. Phosphoserine is present on S4. The span at 9–30 (LSERSCRSERSCRSERSYRSER) shows a compositional bias: basic and acidic residues. Phosphoserine is present on residues S35 and S57. Calponin-homology (CH) domains are found at residues 78–181 (RVQK…LHFQ) and 194–298 (MSAK…DAFP). 2 LRR repeats span residues 148–171 (QRQV…LTLG) and 240–264 (LVDM…VAER). Residue S280 is modified to Phosphoserine. LRR repeat units lie at residues 377–399 (LYKL…YHPN) and 441–464 (LNCE…LESG). In terms of domain architecture, SH3 spans 868–925 (KSTLSVKAICDYRQIEITICKNDECVLEDNSQRTKWKVISPTGNEAMVPSVCLLIPPP). The stretch at 1050 to 1073 (ISELKNIRLRLEECEQRLLKQIQS) is one LRR 5 repeat. S1122 carries the post-translational modification Phosphoserine. 3 LRR repeats span residues 1128 to 1154 (ATTL…VCLN), 1187 to 1210 (PADL…VKDK), and 1257 to 1282 (HRVI…DYRA). A phosphoserine mark is found at S1367 and S1376. LRR repeat units follow at residues 1579 to 1602 (QQEL…IQNH) and 1629 to 1653 (LTAL…TREA). Spectrin repeat units lie at residues 1816–1891 (ELQK…NFEE) and 1933–2041 (QYQQ…ALLQ). S1860 is modified (phosphoserine). One copy of the LRR 11 repeat lies at 1869–1891 (KGDLRFVTISGQKVLETENNFEE). 2 LRR repeats span residues 2058 to 2083 (LQSM…LIQE) and 2194 to 2220 (IQEL…ALGS). The stretch at 2399–2507 (RMEEVQKEAS…TVARQKQLEE (109 aa)) is one Spectrin 3 repeat. Phosphoserine is present on residues S2429 and S2454. LRR repeat units follow at residues 2444 to 2467 (KAFL…LAGL), 2534 to 2557 (GVLG…QFML), and 2702 to 2725 (KKRL…RMNR). Spectrin repeat units lie at residues 2733 to 2837 (TQQF…SRLK) and 2842 to 2945 (KAQK…SLEE). 2 positions are modified to phosphoserine: S2769 and S2895. 3 LRR repeats span residues 2984-3009 (NKNL…YLRD), 3105-3127 (NKIQ…MLEE), and 3214-3237 (KEQV…LIQS). 13 Spectrin repeats span residues 3169-3274 (EDFY…QLQE), 3281-3383 (KFQD…QLED), 3388-3491 (AKQF…SLLE), 3714-3818 (RSQQ…ARLE), 3825-3927 (NQFW…ALDE), 4047-4152 (LAEK…KLED), 4157-4261 (AVQY…HKLE), 4267-4370 (LGQF…QQLQ), 4375-4481 (QAQG…KLEE), 4486-4589 (ATEF…RSLD), 4594-4700 (RAKQ…KLEE), 4707-4808 (QFMD…RLEQ), and 4812-4916 (QAEE…QRLE). T3368 is subject to Phosphothreonine. LRR repeat units follow at residues 3737–3761 (MALG…AFSI) and 3846–3870 (AQLP…QLRE). S4074 carries the phosphoserine modification. K4252 is subject to N6-acetyllysine. The stretch at 4538–4561 (RDQIIELDQTGNQLKFLSQKQDVV) is one LRR 22 repeat. Residues 4993-5023 (PTHAPFIEKSRSGSRKSLNQPTPPPMPILSQ) are disordered. Position 5009 is a phosphoserine (S5009). EF-hand domains follow at residues 5083–5118 (HKKS…SKFP) and 5119–5154 (TTKL…NKDA). Ca(2+) is bound by residues D5096, D5098, D5100, K5102, E5107, D5132, D5134, D5136, Y5138, and E5143. The region spanning 5159-5231 (TDADKIEDEV…EFLVKNDPCR (73 aa)) is the GAR domain. The C-terminal tail stretch occupies residues 5159 to 5430 (TDADKIEDEV…ASPRTPCPKR (272 aa)). Positions 5247-5430 (PEGASQGMTP…ASPRTPCPKR (184 aa)) are disordered. Residues 5267 to 5301 (SSRAASPTRSSSSASQSNHSCTSMPSSPATPASGT) are compositionally biased toward low complexity. T5296 carries the phosphothreonine modification. A compositionally biased stretch (polar residues) spans 5317 to 5341 (TFHSSRTSLAGDTSNSSSPASTGAK). Phosphoserine is present on residues S5321 and S5334. Over residues 5352 to 5366 (SRPGSRAGSRAGSRA) the composition is skewed to low complexity. The segment at 5355-5370 (GSRAGSRAGSRASSRR) is 4 X 4 AA tandem repeats of [GS]-S-R-[AR]. 2 positions are modified to phosphoserine: S5372 and S5375. Polar residues predominate over residues 5381 to 5391 (ETQSACSDTSE). Low complexity predominate over residues 5392 to 5403 (SSAAGGQGSSRR).

This sequence belongs to the plakin or cytolinker family. As to quaternary structure, interacts with MAPRE1, CLASP1, CLASP2 and GOLGA4. Interacts with AXIN1 and LRP6. Found in a complex composed of MACF1, APC; AXIN1, CTNNB1 and GSK3B. Interacts with CAMSAP3. Post-translationally, phosphorylated on serine residues in the C-terminal tail by GSK3B. Phosphorylation inhibits microtubule-binding and this plays a critical role in bulge stem cell migration and skin wound repair. Wnt-signaling can repress phosphorylation.

The protein resides in the cytoplasm. It is found in the cytoskeleton. Its subcellular location is the golgi apparatus. The protein localises to the cell membrane. It localises to the cell projection. The protein resides in the ruffle membrane. It is found in the membrane. Functionally, F-actin-binding protein which plays a role in cross-linking actin to other cytoskeletal proteins and also binds to microtubules. Plays an important role in ERBB2-dependent stabilization of microtubules at the cell cortex. Acts as a positive regulator of Wnt receptor signaling pathway and is involved in the translocation of AXIN1 and its associated complex (composed of APC, CTNNB1 and GSK3B) from the cytoplasm to the cell membrane. Has actin-regulated ATPase activity and is essential for controlling focal adhesions (FAs) assembly and dynamics. Interaction with CAMSAP3 at the minus ends of non-centrosomal microtubules tethers microtubules minus-ends to actin filaments, regulating focal adhesion size and cell migration. May play role in delivery of transport vesicles containing GPI-linked proteins from the trans-Golgi network through its interaction with GOLGA4. Plays a key role in wound healing and epidermal cell migration. Required for efficient upward migration of bulge cells in response to wounding and this function is primarily rooted in its ability to coordinate microtubule dynamics and polarize hair follicle stem cells. As a regulator of actin and microtubule arrangement and stabilization, it plays an essential role in neurite outgrowth, branching and spine formation during brain development. This is Microtubule-actin cross-linking factor 1 from Rattus norvegicus (Rat).